Reading from the N-terminus, the 253-residue chain is Tetraspanin-3 (253 aa).

Topologically, residues 1 to 11 (MGQCGITSSKT) are cytoplasmic. Residues 12 to 32 (VLVFLNLIFWGAAGILCYVGA) form a helical membrane-spanning segment. Residues 33 to 50 (YVFITYDDYDHFFEDVYT) are Extracellular-facing. Residues 51-71 (LIPAVVIIAVGALLFIIGLIG) form a helical membrane-spanning segment. At 72–85 (CCATIRESRCGLAT) the chain is on the cytoplasmic side. A helical membrane pass occupies residues 86–106 (FVIILLLVFVTEVVVVVLGYV). Residues 107-212 (YRAKVENEVD…KKLQEIMMHV (106 aa)) are Extracellular-facing. 4 N-linked (GlcNAc...) asparagine glycosylation sites follow: Asn-127, Asn-152, Asn-167, and Asn-183. A helical transmembrane segment spans residues 213 to 233 (IWAALAFAAIQLLGMLCACIV). Residues 234–253 (LCRRSRDPAYELLITGGAYA) are Cytoplasmic-facing.

The protein belongs to the tetraspanin (TM4SF) family. In terms of assembly, interacts with claudin-11/CLDN11 and integrins.

It is found in the membrane. In terms of biological role, regulates the proliferation and migration of oligodendrocytes, a process essential for normal myelination and repair. This Bos taurus (Bovine) protein is Tetraspanin-3 (TSPAN3).